The chain runs to 291 residues: Cytochrome c-552 (291 aa).

The signal sequence occupies residues 1–23 (MKKTLMASAVGAVIAFGTHGAMA). Residues Cys68, Cys71, His72, Cys157, Cys161, and His162 each coordinate heme c.

In terms of processing, binds 2 heme c groups per subunit.

The protein resides in the periplasm. In terms of biological role, may play a role in nitrite reduction. Shows peroxidase activity on proteolytic modification. The polypeptide is Cytochrome c-552 (nirB) (Stutzerimonas stutzeri (Pseudomonas stutzeri)).